Consider the following 802-residue polypeptide: Endoplasmin (802 aa).

The first 21 residues, 1 to 21, serve as a signal peptide directing secretion; the sequence is MRALWVLGLCCVLLTFGSARA. Residues 42 to 44 carry the SRT pseudosubstrate motif motif; the sequence is SRT. N-linked (GlcNAc...) asparagine glycosylation occurs at Asn-62. Ser-64 is modified (phosphoserine). N-linked (GlcNAc...) asparagine glycosylation is present at Asn-107. Residues Asn-107, Asp-149, and Asn-162 each contribute to the ATP site. Lys-168 carries the post-translational modification N6-(2-hydroxyisobutyryl)lysine. Phosphoserine is present on Ser-172. Phe-199 provides a ligand contact to ATP. A glycan (N-linked (GlcNAc...) asparagine) is linked at Asn-217. Residues 288–323 form a disordered region; that stretch reads TVEEPAEEEEAAKEEKEEADDEAAVEEEEEEKKPKT. Acidic residues predominate over residues 289–317; it reads VEEPAEEEEAAKEEKEEADDEAAVEEEEE. The residue at position 403 (Ser-403) is a Phosphoserine. Lys-404 is subject to N6-succinyllysine. Asn-445 carries an N-linked (GlcNAc...) asparagine glycan. Position 447 is a phosphoserine (Ser-447). At Lys-479 the chain carries N6-acetyllysine. Residues Asn-481 and Asn-502 are each glycosylated (N-linked (GlcNAc...) asparagine). N6-succinyllysine is present on Lys-633. The segment at 750–802 is disordered; sequence DPDAKVEEEPEEEPEDTTEDTEQDEEEEMDAGTDEEEQEQEPEKKSTAEKDEL. Positions 757 to 789 are enriched in acidic residues; that stretch reads EEPEEEPEDTTEDTEQDEEEEMDAGTDEEEQEQ. Thr-782 is modified (phosphothreonine). Basic and acidic residues predominate over residues 790 to 802; it reads EPEKKSTAEKDEL. Residues 799-802 carry the Prevents secretion from ER motif; sequence KDEL.

It belongs to the heat shock protein 90 family. Homodimer; disulfide-linked. Component of an EIF2 complex at least composed of CELF1/CUGBP1, CALR, CALR3, EIF2S1, EIF2S2, HSP90B1 and HSPA5. Part of a large chaperone multiprotein complex comprising DNAJB11, HSP90B1, HSPA5, HYOU, PDIA2, PDIA4, PDIA6, PPIB, SDF2L1, UGGT1 and very small amounts of ERP29, but not, or at very low levels, CALR nor CANX. Interacts with AIMP1; regulates its retention in the endoplasmic reticulum. Hyperglycosylated form interacts with OS9; promoting its degradation by the endoplasmic reticulum associated degradation (ERAD). Interacts with CNPY3. This interaction is disrupted in the presence of ATP. Interacts with TLR4 and TLR9, but not with TLR3. Interacts with MZB1 in a calcium-dependent manner. Interacts with METTL23. Interacts with IL1B; the interaction facilitates cargo translocation into the ERGIC. Interacts with EIF2AK3. Phosphorylated by CK2. Post-translationally, N-glycosylated cotranslationally at Asn-217 by STT3A-containing OST-A complex: this glycosylation is constitutive. In response to various stress, 5 additional facultative sites (Asn-62, Asn-107, Asn-445, Asn-481 and Asn-502) can be glycosylated post-translationally by STT3B-containing OST-B complex, leading to a hyperglycosylated form that is degraded by the ER-associated degradation (ERAD) pathway. In normal conditions, the OST-A complex together with CCDC134 prevent glycosylation at facultative sites during protein folding, thereby preventing hyperglycosylation. Mechanistically, nascent HSP90B1 is tethered during translation to a specialized CCDC134-containing translocon that forms a microenvironment for its folding, in which STT3A associates with the SRT pseudosubstrate motif, and prevents access to facultative glycosylation sites until folding is completed, rendering its facultative sites inaccessible to the OST-B complex.

The protein resides in the endoplasmic reticulum lumen. Its subcellular location is the sarcoplasmic reticulum lumen. It is found in the melanosome. It catalyses the reaction ATP + H2O = ADP + phosphate + H(+). ATP-dependent chaperone involved in the processing of proteins in the endoplasmic reticulum, regulating their transport. Together with MESD, acts as a modulator of the Wnt pathway by promoting the folding of LRP6, a coreceptor of the canonical Wnt pathway. When associated with CNPY3, required for proper folding of Toll-like receptors. Promotes folding and trafficking of TLR4 to the cell surface. May participate in the unfolding of cytosolic leaderless cargos (lacking the secretion signal sequence) such as the interleukin 1/IL-1 to facilitate their translocation into the ERGIC (endoplasmic reticulum-Golgi intermediate compartment) and secretion; the translocation process is mediated by the cargo receptor TMED10. The polypeptide is Endoplasmin (HSP90B1) (Oryctolagus cuniculus (Rabbit)).